The sequence spans 265 residues: Vegetative storage protein 2 (265 aa).

Residues 1–18 form the signal peptide; the sequence is MKILSLSLLLLLAATVSA. Residues N110, N188, and N210 are each glycosylated (N-linked (GlcNAc...) asparagine).

The protein belongs to the APS1/VSP family. In terms of tissue distribution, highly expressed in flowers, but also found in leaves, vegetative shoots, petioles, peduncles, and receptacles of floral organs.

In terms of biological role, may function as somatic storage protein during early seedling development. This chain is Vegetative storage protein 2 (VSP2), found in Arabidopsis thaliana (Mouse-ear cress).